Consider the following 304-residue polypeptide: Polyisoprenyl-teichoic acid--peptidoglycan teichoic acid transferase TagU (304 aa).

The Cytoplasmic portion of the chain corresponds to 1–4; the sequence is MKKK. The helical; Signal-anchor for type II membrane protein transmembrane segment at 5–25 threads the bilayer; sequence ILFWILGIIGILIIGGGAYAY. Residues 26–304 are Extracellular-facing; sequence SIYSSVSKTL…KLRAHLEVTK (279 aa).

It belongs to the LytR/CpsA/Psr (LCP) family.

The protein resides in the cell membrane. It functions in the pathway cell wall biogenesis. Its function is as follows. May catalyze the final step in cell wall teichoic acid biosynthesis, the transfer of the anionic cell wall polymers (APs) from their lipid-linked precursor to the cell wall peptidoglycan (PG). This Bacillus cereus (strain ATCC 14579 / DSM 31 / CCUG 7414 / JCM 2152 / NBRC 15305 / NCIMB 9373 / NCTC 2599 / NRRL B-3711) protein is Polyisoprenyl-teichoic acid--peptidoglycan teichoic acid transferase TagU.